A 292-amino-acid chain; its full sequence is 33 kDa chaperonin (292 aa).

2 disulfide bridges follow: Cys230–Cys232 and Cys263–Cys266.

This sequence belongs to the HSP33 family. Post-translationally, under oxidizing conditions two disulfide bonds are formed involving the reactive cysteines. Under reducing conditions zinc is bound to the reactive cysteines and the protein is inactive.

It localises to the cytoplasm. Redox regulated molecular chaperone. Protects both thermally unfolding and oxidatively damaged proteins from irreversible aggregation. Plays an important role in the bacterial defense system toward oxidative stress. This Enterobacter sp. (strain 638) protein is 33 kDa chaperonin.